Here is a 351-residue protein sequence, read N- to C-terminus: L-threonine 3-dehydrogenase (351 aa).

Cys39 serves as a coordination point for Zn(2+). Active-site charge relay system residues include Thr41 and His44. Zn(2+)-binding residues include His64, Glu65, Cys94, Cys97, Cys100, and Cys108. NAD(+)-binding positions include Ile176, Asp196, Arg201, 271–273, and 295–296; these read LGI and IY.

It belongs to the zinc-containing alcohol dehydrogenase family. As to quaternary structure, homotetramer. It depends on Zn(2+) as a cofactor.

The protein localises to the cytoplasm. It carries out the reaction L-threonine + NAD(+) = (2S)-2-amino-3-oxobutanoate + NADH + H(+). It functions in the pathway amino-acid degradation; L-threonine degradation via oxydo-reductase pathway; glycine from L-threonine: step 1/2. In terms of biological role, catalyzes the NAD(+)-dependent oxidation of L-threonine to 2-amino-3-ketobutyrate. This Francisella tularensis subsp. novicida (strain U112) protein is L-threonine 3-dehydrogenase.